We begin with the raw amino-acid sequence, 622 residues long: Phosphoenolpyruvate carboxykinase [GTP] (622 aa).

Substrate is bound by residues Arg-86 and 220–222 (YGG). Residues Lys-229 and His-248 each contribute to the Mn(2+) site. Ser-270 lines the substrate pocket. 271–276 (MCGKTS) contacts GTP. Residue Cys-272 is part of the active site. Asp-289 provides a ligand contact to Mn(2+). Positions 360–374 (ENHSGKWWRGKKDSE) are enriched in basic and acidic residues. Positions 360-381 (ENHSGKWWRGKKDSEGNEISPS) are disordered. Residue 384 to 386 (NAR) coordinates substrate. Positions 386 and 418 each coordinate GTP.

Belongs to the phosphoenolpyruvate carboxykinase [GTP] family. Mn(2+) is required as a cofactor.

It is found in the cytoplasm. The enzyme catalyses oxaloacetate + GTP = phosphoenolpyruvate + GDP + CO2. It functions in the pathway carbohydrate biosynthesis; gluconeogenesis. Catalyzes the conversion of oxaloacetate (OAA) to phosphoenolpyruvate (PEP), the rate-limiting step in the metabolic pathway that produces glucose from lactate and other precursors derived from the citric acid cycle. This Thermococcus sibiricus (strain DSM 12597 / MM 739) protein is Phosphoenolpyruvate carboxykinase [GTP].